A 222-amino-acid chain; its full sequence is Abasic site processing protein YedK (222 aa).

C2 functions as the Nucleophile in the catalytic mechanism. C2 bears the Thiazolidine linkage to a ring-opened DNA abasic site mark. E105 is a catalytic residue.

Belongs to the SOS response-associated peptidase family.

Its activity is regulated as follows. Formation and reversal of DNA-protein cross-link depends on DNA context. Catalyzes formation of the thiazolidine linkage in presence of abasic sites in single-stranded DNA. Mediates the reversal of the thiazolidine cross-link in presence of double stranded DNA. Its function is as follows. Sensor of abasic sites in single-stranded DNA (ssDNA) required to preserve genome integrity by promoting error-free repair of abasic sites. Recognizes and binds abasic sites in ssDNA at replication forks and chemically modifies the lesion by forming a covalent cross-link with DNA: forms a stable thiazolidine linkage between a ring-opened abasic site and the alpha-amino and sulfhydryl substituents of its N-terminal catalytic cysteine residue. The DNA-protein cross-link is then reversed: able to catalyze the reversal of the thiazolidine cross-link and cycle between a cross-link and a non-cross-linked state depending on DNA context: mediates self-reversal of the thiazolidine cross-link in double stranded DNA. May act as a protease: mediates autocatalytic processing of its N-terminal methionine in order to expose the catalytic cysteine. The chain is Abasic site processing protein YedK from Escherichia coli (strain K12).